A 155-amino-acid chain; its full sequence is Small ribosomal subunit protein uS7c (155 aa).

This sequence belongs to the universal ribosomal protein uS7 family. Part of the 30S ribosomal subunit.

Its subcellular location is the plastid. One of the primary rRNA binding proteins, it binds directly to 16S rRNA where it nucleates assembly of the head domain of the 30S subunit. The sequence is that of Small ribosomal subunit protein uS7c (rps7) from Lathraea clandestina (Purple toothwort).